The chain runs to 398 residues: 1-deoxy-D-xylulose 5-phosphate reductoisomerase (398 aa).

Residues Thr10, Gly11, Ser12, Ile13, Gly36, Lys37, Asn38, and Asn124 each coordinate NADPH. Position 125 (Lys125) interacts with 1-deoxy-D-xylulose 5-phosphate. Glu126 provides a ligand contact to NADPH. Asp150 provides a ligand contact to Mn(2+). Residues Ser151, Glu152, Ser186, and His209 each contribute to the 1-deoxy-D-xylulose 5-phosphate site. Residue Glu152 participates in Mn(2+) binding. Gly215 provides a ligand contact to NADPH. The 1-deoxy-D-xylulose 5-phosphate site is built by Ser222, Asn227, Lys228, and Glu231. Residue Glu231 participates in Mn(2+) binding.

The protein belongs to the DXR family. In terms of assembly, homodimer. Requires Mg(2+) as cofactor. Mn(2+) serves as cofactor.

It carries out the reaction 2-C-methyl-D-erythritol 4-phosphate + NADP(+) = 1-deoxy-D-xylulose 5-phosphate + NADPH + H(+). It participates in isoprenoid biosynthesis; isopentenyl diphosphate biosynthesis via DXP pathway; isopentenyl diphosphate from 1-deoxy-D-xylulose 5-phosphate: step 1/6. In terms of biological role, catalyzes the NADPH-dependent rearrangement and reduction of 1-deoxy-D-xylulose-5-phosphate (DXP) to 2-C-methyl-D-erythritol 4-phosphate (MEP). The protein is 1-deoxy-D-xylulose 5-phosphate reductoisomerase of Salmonella paratyphi A (strain ATCC 9150 / SARB42).